The sequence spans 157 residues: Putative low molecular weight protein-tyrosine-phosphatase slr0328 (157 aa).

Cysteine 7 functions as the Nucleophile in the catalytic mechanism. Arginine 13 is a catalytic residue. The active-site Proton donor is the aspartate 124.

This sequence belongs to the low molecular weight phosphotyrosine protein phosphatase family.

It catalyses the reaction O-phospho-L-tyrosyl-[protein] + H2O = L-tyrosyl-[protein] + phosphate. The sequence is that of Putative low molecular weight protein-tyrosine-phosphatase slr0328 from Synechocystis sp. (strain ATCC 27184 / PCC 6803 / Kazusa).